The chain runs to 120 residues: Ribosome-binding factor A (120 aa).

It belongs to the RbfA family. In terms of assembly, monomer. Binds 30S ribosomal subunits, but not 50S ribosomal subunits or 70S ribosomes.

Its subcellular location is the cytoplasm. One of several proteins that assist in the late maturation steps of the functional core of the 30S ribosomal subunit. Associates with free 30S ribosomal subunits (but not with 30S subunits that are part of 70S ribosomes or polysomes). Required for efficient processing of 16S rRNA. May interact with the 5'-terminal helix region of 16S rRNA. The protein is Ribosome-binding factor A of Clostridium botulinum (strain ATCC 19397 / Type A).